Here is a 247-residue protein sequence, read N- to C-terminus: 5-oxoprolinase subunit A (247 aa).

It belongs to the LamB/PxpA family. Forms a complex composed of PxpA, PxpB and PxpC.

It carries out the reaction 5-oxo-L-proline + ATP + 2 H2O = L-glutamate + ADP + phosphate + H(+). Catalyzes the cleavage of 5-oxoproline to form L-glutamate coupled to the hydrolysis of ATP to ADP and inorganic phosphate. The sequence is that of 5-oxoprolinase subunit A from Histophilus somni (strain 129Pt) (Haemophilus somnus).